We begin with the raw amino-acid sequence, 307 residues long: ADP,ATP carrier protein 3 (307 aa).

Solcar repeat units follow at residues 10–103 (TNFA…IKLM), 114–206 (KWFA…LKPL), and 214–300 (GSFL…LQMI). Transmembrane regions (helical) follow at residues 12-39 (FAINFLMGGVSAAIAKTAASPIERVKIL), 80-104 (TANVIRYFPTQALNFAFKDKIKLMF), 112-132 (YGKWFAGNLASGGAAGALSLL), 182-203 (FMPSVVGIVVYRGLYFGMFDSL), and 217-237 (LASFLLGWVVTTGASTCSYPL). Residues Arg85 and Lys97 each coordinate ADP. Residue Arg241 coordinates ADP. The segment at 241 to 246 (RRRMMM) is important for transport activity. A Nucleotide carrier signature motif motif is present at residues 241 to 246 (RRRMMM). The chain crosses the membrane as a helical span at residues 277-297 (CGANILRSVAGAGVISMYDQL).

This sequence belongs to the mitochondrial carrier (TC 2.A.29) family. As to quaternary structure, monomer.

The protein resides in the mitochondrion inner membrane. The enzyme catalyses ADP(in) + ATP(out) = ADP(out) + ATP(in). Its activity is regulated as follows. The matrix-open state (m-state) is inhibited by the membrane-permeable bongkrekic acid (BKA). The cytoplasmic-open state (c-state) is inhibited by the membrane-impermeable toxic inhibitor carboxyatractyloside (CATR). ADP:ATP antiporter that mediates import of ADP into the mitochondrial matrix for ATP synthesis, and export of ATP out to fuel the cell. Cycles between the cytoplasmic-open state (c-state) and the matrix-open state (m-state): operates by the alternating access mechanism with a single substrate-binding site intermittently exposed to either the cytosolic (c-state) or matrix (m-state) side of the inner mitochondrial membrane. This is ADP,ATP carrier protein 3 (AAC3) from Saccharomyces cerevisiae (strain ATCC 204508 / S288c) (Baker's yeast).